The following is a 160-amino-acid chain: Serine-protein kinase RsbW (160 aa).

Homodimer. In stressed cells, forms a complex with RsbV. The predominant form of this complex has a stoichiometry of 2:2 (one dimer of RsbW is bound by two monomers of RsbV). In unstressed cells, forms a 2:1 complex with sigma-B.

It catalyses the reaction L-seryl-[protein] + ATP = O-phospho-L-seryl-[protein] + ADP + H(+). The enzyme catalyses L-threonyl-[protein] + ATP = O-phospho-L-threonyl-[protein] + ADP + H(+). With respect to regulation, the higher affinity of RsbW for RsbV than for sigma-B, rather than a difference in the concentrations of RsbV and sigma-B, is the driving force that is responsible for the switch of RsbW to non-phosphorylated RsbV. The kinase activity of RsbW is directly regulated by changes in the ATP/ADP ratio. In terms of biological role, negative regulator of sigma-B activity. Phosphorylates and inactivates its specific antagonist protein, RsbV. Upon phosphorylation of RsbV, RsbW is released and binds to sigma-B, thereby blocking its ability to form an RNA polymerase holoenzyme (E-sigma-B). This chain is Serine-protein kinase RsbW (rsbW), found in Bacillus subtilis (strain 168).